The primary structure comprises 533 residues: Probable protein kinase UbiB (533 aa).

A helical transmembrane segment spans residues 24–44 (LILELPMLPWWLRLLGAALPW). The 369-residue stretch at 126-494 (RFEREPLASA…WKSSRHDWLG (369 aa)) folds into the Protein kinase domain. ATP-binding positions include 132 to 140 (LASASVAQV) and Lys154. Asp289 (proton acceptor) is an active-site residue. The chain crosses the membrane as a helical span at residues 510–530 (LGQQLEAWPAWVMLAGGVFLI).

This sequence belongs to the ABC1 family. UbiB subfamily.

It localises to the cell inner membrane. The protein operates within cofactor biosynthesis; ubiquinone biosynthesis [regulation]. Is probably a protein kinase regulator of UbiI activity which is involved in aerobic coenzyme Q (ubiquinone) biosynthesis. In Pseudomonas paraeruginosa (strain DSM 24068 / PA7) (Pseudomonas aeruginosa (strain PA7)), this protein is Probable protein kinase UbiB.